Consider the following 1134-residue polypeptide: Ankyrin repeat and SAM domain-containing protein 1A (1134 aa).

Glycine 2 is subject to N-acetylglycine. Residues 33 to 55 show a composition bias toward gly residues; it reads GGGGGGGSGGGGGGSGGGGGGLG. Residues 33–57 are disordered; the sequence is GGGGGGGSGGGGGGSGGGGGGLGSS. ANK repeat units lie at residues 79–108, 112–141, 148–177, 181–210, 214–243, and 246–275; these read TGYT…LTNV, KGCY…SHTR, DNET…DPTM, KFET…NLLS, KKHT…DSNY, and EMGS…DVNI. Basic and acidic residues predominate over residues 305–317; sequence HMTGKRSTKEVDK. 3 disordered regions span residues 305–338, 375–422, and 469–498; these read HMTG…KSQG, SMAS…EEDH, and VDGK…VPEQ. Threonine 318 carries the post-translational modification Phosphothreonine. A compositionally biased stretch (polar residues) spans 328–337; that stretch reads SMDSISQKSQ. Residues 382–392 show a composition bias toward basic and acidic residues; it reads SDQDSTNKEAE. The residue at position 507 (serine 507) is a Phosphoserine. The tract at residues 569 to 650 is disordered; that stretch reads LTGLPTTNSR…MGSRSESLSN (82 aa). Polar residues predominate over residues 572 to 588; that stretch reads LPTTNSRSHPETLTHTA. A compositionally biased stretch (basic and acidic residues) spans 613–628; the sequence is PKAELKLSRSLSKSDS. Phosphoserine occurs at positions 620, 622, 624, 626, 628, 647, 661, 663, 666, and 677. The segment covering 633–650 has biased composition (polar residues); that stretch reads CSPTEDATMGSRSESLSN. SAM domains follow at residues 696–762 and 770–837; these read TLEQ…LPKV and NSPP…YEEP. Polar residues predominate over residues 856 to 868; sequence TSSPLSQNDSCTG. Disordered stretches follow at residues 856–896 and 1079–1134; these read TSSP…APSR and AEMI…LSTN. Serine 887 is subject to Phosphoserine. The 156-residue stretch at 936 to 1091 folds into the PID domain; sequence IFESCGYEAN…IETKSSKPVP (156 aa). Basic and acidic residues predominate over residues 1123-1134; it reads PKPDSKRSLSTN.

Interacts (via SAM domain) with EPHA2 (via SAM domain). Interacts with EPHA8; EPHA8 kinase activity-independent but stimulated by EPHA8 ubiquitination. Interacts (via SAM domain) with EPHA6 (via SAM domain). Post-translationally, phosphorylated on tyrosine residues in response to EGF and PDGF. As to expression, widely expressed (at protein level).

Its subcellular location is the cytoplasm. It is found in the cell projection. Functionally, regulator of different signaling pathways. Regulates EPHA8 receptor tyrosine kinase signaling to control cell migration and neurite retraction. In Homo sapiens (Human), this protein is Ankyrin repeat and SAM domain-containing protein 1A (ANKS1A).